The chain runs to 205 residues: Urease accessory protein UreG (205 aa).

A GTP-binding site is contributed by 10-17 (GPVGAGKT).

The protein belongs to the SIMIBI class G3E GTPase family. UreG subfamily. Homodimer. UreD, UreF and UreG form a complex that acts as a GTP-hydrolysis-dependent molecular chaperone, activating the urease apoprotein by helping to assemble the nickel containing metallocenter of UreC. The UreE protein probably delivers the nickel.

Its subcellular location is the cytoplasm. Its function is as follows. Facilitates the functional incorporation of the urease nickel metallocenter. This process requires GTP hydrolysis, probably effectuated by UreG. The sequence is that of Urease accessory protein UreG from Corynebacterium glutamicum (strain R).